Reading from the N-terminus, the 205-residue chain is Dihydrofolate reductase (205 aa).

One can recognise a DHFR domain in the interval 1-201 (MLALVVALAS…TSFKMFLYTK (201 aa)). NADP(+) contacts are provided by residues alanine 7 and 13 to 19 (GIGNANA). Substrate is bound at residue 29-34 (DMAWFR). 62-64 (RRT) contributes to the NADP(+) binding site. Arginine 78 provides a ligand contact to substrate. NADP(+) is bound by residues 84–86 (SRG) and 118–125 (GGRDVYSL).

The protein belongs to the dihydrofolate reductase family.

It catalyses the reaction (6S)-5,6,7,8-tetrahydrofolate + NADP(+) = 7,8-dihydrofolate + NADPH + H(+). Its pathway is cofactor biosynthesis; tetrahydrofolate biosynthesis; 5,6,7,8-tetrahydrofolate from 7,8-dihydrofolate: step 1/1. In terms of biological role, key enzyme in folate metabolism. Catalyzes an essential reaction for de novo glycine and purine synthesis, and for DNA precursor synthesis. This is Dihydrofolate reductase (DHFR-1) from Encephalitozoon cuniculi (strain GB-M1) (Microsporidian parasite).